The following is a 234-amino-acid chain: Phosphoribosylaminoimidazole-succinocarboxamide synthase (234 aa).

Belongs to the SAICAR synthetase family.

The catalysed reaction is 5-amino-1-(5-phospho-D-ribosyl)imidazole-4-carboxylate + L-aspartate + ATP = (2S)-2-[5-amino-1-(5-phospho-beta-D-ribosyl)imidazole-4-carboxamido]succinate + ADP + phosphate + 2 H(+). Its pathway is purine metabolism; IMP biosynthesis via de novo pathway; 5-amino-1-(5-phospho-D-ribosyl)imidazole-4-carboxamide from 5-amino-1-(5-phospho-D-ribosyl)imidazole-4-carboxylate: step 1/2. The protein is Phosphoribosylaminoimidazole-succinocarboxamide synthase of Clostridium botulinum (strain Langeland / NCTC 10281 / Type F).